Reading from the N-terminus, the 198-residue chain is Leucyl/phenylalanyl-tRNA--protein transferase (198 aa).

Belongs to the L/F-transferase family.

Its subcellular location is the cytoplasm. It carries out the reaction N-terminal L-lysyl-[protein] + L-leucyl-tRNA(Leu) = N-terminal L-leucyl-L-lysyl-[protein] + tRNA(Leu) + H(+). The catalysed reaction is N-terminal L-arginyl-[protein] + L-leucyl-tRNA(Leu) = N-terminal L-leucyl-L-arginyl-[protein] + tRNA(Leu) + H(+). The enzyme catalyses L-phenylalanyl-tRNA(Phe) + an N-terminal L-alpha-aminoacyl-[protein] = an N-terminal L-phenylalanyl-L-alpha-aminoacyl-[protein] + tRNA(Phe). Functionally, functions in the N-end rule pathway of protein degradation where it conjugates Leu, Phe and, less efficiently, Met from aminoacyl-tRNAs to the N-termini of proteins containing an N-terminal arginine or lysine. This Synechocystis sp. (strain ATCC 27184 / PCC 6803 / Kazusa) protein is Leucyl/phenylalanyl-tRNA--protein transferase.